Reading from the N-terminus, the 509-residue chain is MEISERVRARLAVLSGHLSEGKQDSPAIERWCTSADTSVAPLGSLKGTLTIVDERTGKNYKVPVSDDGTVKAVDFKKIVTGKEDKGLKLYDPGYLNTAPVRSSISYIDGDEGILRYRGYPIEEMAENSTFLEVAYLLMYGNLPSESQLSDWEFAVSQHSAVPQGVLDIIQSMPHDAHPMGVLVSAMSALSIFHPDANPALRGQDIYDSKQVRDKQIIRIIGKAPTIAAAAYLRMAGRPPVLPSGNLPYADNFLYMLDSLGNRSYKPNPRLARVLDILFILHAEHEMNCSTAAARHLASSGVDVYTAVAGAVGALYGPLHGGANEAVLKMLSEIGTVENIPEFIEGVKNRKRKMSGFGHRVYKNYDPRAKVIKNLADEVFSIVGKDPLIEVAVALEKAALSDDYFVKRKLYPNVDFYSGLIYRAMGFPPEFFTVLFAIPRMAGYLSHWKESLDDPDTKIMRPQQVYTGVWLRHYTPVRERIVTDDSKESDKLGQVATSNASRRRLAGSSV.

Catalysis depends on residues His-319, His-358, and Asp-414. Positions 485-509 (SKESDKLGQVATSNASRRRLAGSSV) are disordered. Residues 500-509 (SRRRLAGSSV) are compositionally biased toward basic residues.

Belongs to the citrate synthase family. Widely expressed. Expressed throughout the shoot. Expressed in flower, silique, stem, cauline leaf, young leaf, mature leaf and senescent leaf.

The protein localises to the peroxisome. The catalysed reaction is oxaloacetate + acetyl-CoA + H2O = citrate + CoA + H(+). It functions in the pathway carbohydrate metabolism; tricarboxylic acid cycle; isocitrate from oxaloacetate: step 1/2. Its function is as follows. Peroxisomal citrate synthase required for the fatty acid respiration in seedlings, citrate being exported from peroxisomes into mitochondria during respiration of triacylglycerol (TAG). Indeed, complete respiration requires the transfer of carbon in the form of citrate from the peroxisome to the mitochondria. In Arabidopsis thaliana (Mouse-ear cress), this protein is Citrate synthase 3, peroxisomal (CSY3).